We begin with the raw amino-acid sequence, 377 residues long: UPF0754 membrane protein LMHCC_0318 (377 aa).

Transmembrane regions (helical) follow at residues 1-21 (MSVLFTILLMAVIGGFIGAMT) and 357-377 (YLGGILGGFIGVIQGILAMWI).

Belongs to the UPF0754 family.

It localises to the cell membrane. The chain is UPF0754 membrane protein LMHCC_0318 from Listeria monocytogenes serotype 4a (strain HCC23).